Consider the following 914-residue polypeptide: NADH-quinone oxidoreductase subunit G (914 aa).

In terms of domain architecture, 2Fe-2S ferredoxin-type spans 1–83 (MATIHVDGKE…GTFISIDDSE (83 aa)). The [2Fe-2S] cluster site is built by cysteine 34, cysteine 45, cysteine 48, and cysteine 67. One can recognise a 4Fe-4S His(Cys)3-ligated-type domain in the interval 83 to 122 (EAKAFRESVVEWLMTNHPHDCPVCEEGGNCHLQDMTVMTG). [4Fe-4S] cluster contacts are provided by histidine 99, cysteine 103, cysteine 106, cysteine 112, cysteine 151, cysteine 154, cysteine 157, cysteine 201, cysteine 228, cysteine 231, cysteine 235, and cysteine 263. Residues 221–277 (MQFAPSICQQCSVGCNTSPGERYGELRRIENRYNGSVNHYFMCDRGRFGYGYVNLKD) form the 4Fe-4S Mo/W bis-MGD-type domain.

Belongs to the complex I 75 kDa subunit family. In terms of assembly, composed of 13 different subunits. Subunits NuoCD, E, F, and G constitute the peripheral sector of the complex. It depends on [2Fe-2S] cluster as a cofactor. Requires [4Fe-4S] cluster as cofactor.

The enzyme catalyses a quinone + NADH + 5 H(+)(in) = a quinol + NAD(+) + 4 H(+)(out). NDH-1 shuttles electrons from NADH, via FMN and iron-sulfur (Fe-S) centers, to quinones in the respiratory chain. The immediate electron acceptor for the enzyme in this species is believed to be ubiquinone. Couples the redox reaction to proton translocation (for every two electrons transferred, four hydrogen ions are translocated across the cytoplasmic membrane), and thus conserves the redox energy in a proton gradient. The sequence is that of NADH-quinone oxidoreductase subunit G (nuoG) from Yersinia pestis.